The following is a 354-amino-acid chain: Neuronal growth regulator 1 (354 aa).

The signal sequence occupies residues 1-37; sequence MDMMLLVQGACCSNQWLAAVLLSLCCLLPSCLPAGQS. Ig-like C2-type domains follow at residues 38–134, 139–221, and 225–313; these read VDFP…VHLT, PKIY…KVVV, and PTIQ…LPLN. A disulfide bond links Cys60 and Cys118. N-linked (GlcNAc...) asparagine glycosylation is found at Asn73 and Asn155. Intrachain disulfides connect Cys160–Cys203 and Cys245–Cys297. Tyr187 carries the post-translational modification Phosphotyrosine. N-linked (GlcNAc...) asparagine glycans are attached at residues Asn275, Asn286, Asn294, and Asn307. Gly324 carries the GPI-anchor amidated glycine lipid modification. Positions 325 to 354 are cleaved as a propeptide — removed in mature form; the sequence is SADVLFSCWYLVLTLSSFTSIFYLKNAILQ.

This sequence belongs to the immunoglobulin superfamily. IgLON family.

It localises to the cell membrane. May be involved in cell-adhesion. May function as a trans-neural growth-promoting factor in regenerative axon sprouting in the mammalian brain. This chain is Neuronal growth regulator 1 (NEGR1), found in Homo sapiens (Human).